The chain runs to 495 residues: Thioredoxin reductase SEP1 (495 aa).

37 to 54 (DFVKPSPPGTTWGLGGTC) provides a ligand contact to FAD. A disulfide bridge links Cys54 with Cys59. His468 functions as the Proton acceptor in the catalytic mechanism. The segment at residues 493-494 (CU) is a cross-link (cysteinyl-selenocysteine (Cys-Sec)). Sec494 is a non-standard amino acid (selenocysteine).

It belongs to the class-I pyridine nucleotide-disulfide oxidoreductase family. In terms of assembly, homodimer. The cofactor is FAD. In terms of processing, the N-terminus is blocked.

The enzyme catalyses [thioredoxin]-dithiol + NADP(+) = [thioredoxin]-disulfide + NADPH + H(+). Its activity is regulated as follows. Activity was very low in selenium-depleted cells, but increased 4-fold to the same level as in selenium-sufficient cells for 70 hours after the addition of 10 nm selenite. In Emiliania huxleyi (Coccolithophore), this protein is Thioredoxin reductase SEP1 (SEP1).